The chain runs to 148 residues: uncharacterized protein (148 aa).

Residues 1–23 form the signal peptide; that stretch reads MKALVAVSAVAVVALLGVSSAQA. The interval 22-45 is disordered; the sequence is QADPEADPGAGEANYGGPPSSPRL.

To M.leprae ML2452.

This is an uncharacterized protein from Mycobacterium bovis (strain ATCC BAA-935 / AF2122/97).